A 395-amino-acid polypeptide reads, in one-letter code: Zinc-regulated GTPase metalloprotein activator 1A (395 aa).

The segment at 1–22 is disordered; that stretch reads MLPAVGSADEEEDPAEEDCPEL. Acidic residues predominate over residues 8 to 20; sequence ADEEEDPAEEDCP. The short motif at 17–24 is the psi-PxLVp motif element; it reads EDCPELVP. 49–56 provides a ligand contact to GTP; it reads GYLGAGKT. Positions 107, 109, and 110 each coordinate Zn(2+). The CXCC motif motif lies at 107–110; it reads CLCC. Residues 110–114 and 203–206 each bind GTP; these read CSVKD and NKTD. The CobW C-terminal domain occupies 274–377; sequence IVTITFEVPG…ILKQLFIATV (104 aa).

Belongs to the SIMIBI class G3E GTPase family. ZNG1 subfamily. As to expression, ubiquitously expressed. Up-regulated in cultured astrocytes treated with dopamine.

It localises to the nucleus. It catalyses the reaction GTP + H2O = GDP + phosphate + H(+). In terms of biological role, zinc chaperone that directly transfers zinc cofactor to target metalloproteins, thereby activating them. Catalyzes zinc insertion into the active site of methionine aminopeptidase METAP1, which function to cleave the initiator methionine from polypeptides during or after protein translation. Mechanistically, the N-terminal psi-PxLVp motif binds to the C6H2-type zinc finger of inactive form of METAP1. After formation of the docked complex, zinc is transferred from the CXCC motif in the GTPase domain of ZNG1A to the zinc binding site in the peptidase domain of METAP1 in a process requiring GTP hydrolysis. GTP/GDP exchange is required for release of active METAP1. This Homo sapiens (Human) protein is Zinc-regulated GTPase metalloprotein activator 1A.